The following is a 255-amino-acid chain: tRNA (guanine-N(7)-)-methyltransferase (255 aa).

The tract at residues Met-1–Val-29 is disordered. Positions Ala-17–Asp-27 are enriched in acidic residues. S-adenosyl-L-methionine is bound by residues Glu-86, Glu-111, Asp-138, and Asp-161. Residue Asp-161 is part of the active site. Residues Lys-165, Asp-197, and Thr-232 to Glu-235 each bind substrate.

It belongs to the class I-like SAM-binding methyltransferase superfamily. TrmB family.

It catalyses the reaction guanosine(46) in tRNA + S-adenosyl-L-methionine = N(7)-methylguanosine(46) in tRNA + S-adenosyl-L-homocysteine. The protein operates within tRNA modification; N(7)-methylguanine-tRNA biosynthesis. In terms of biological role, catalyzes the formation of N(7)-methylguanine at position 46 (m7G46) in tRNA. In Burkholderia ambifaria (strain ATCC BAA-244 / DSM 16087 / CCUG 44356 / LMG 19182 / AMMD) (Burkholderia cepacia (strain AMMD)), this protein is tRNA (guanine-N(7)-)-methyltransferase.